A 361-amino-acid polypeptide reads, in one-letter code: Serine/threonine-protein kinase SAPK9 (361 aa).

Residues 22 to 278 (YELVKEIGSG…MPEIKNHPWF (257 aa)) enclose the Protein kinase domain. ATP contacts are provided by residues 28 to 36 (IGSGNFGVA) and Lys51. Asp141 serves as the catalytic Proton acceptor.

Belongs to the protein kinase superfamily. Ser/Thr protein kinase family. Interacts with BZIP46. In terms of processing, may be phosphorylated. As to expression, expressed in leaf sheaths and roots. Expressed in shoots of young seedlings.

The protein resides in the cytoplasm. It is found in the nucleus. It catalyses the reaction L-seryl-[protein] + ATP = O-phospho-L-seryl-[protein] + ADP + H(+). The catalysed reaction is L-threonyl-[protein] + ATP = O-phospho-L-threonyl-[protein] + ADP + H(+). Activated by hyperosmotic stress and abscisic acid (ABA). In terms of biological role, may play a role in signal transduction of hyperosmotic response. Can phosphorylate BZIP46 in vitro. This Oryza sativa subsp. japonica (Rice) protein is Serine/threonine-protein kinase SAPK9 (SAPK9).